Here is a 180-residue protein sequence, read N- to C-terminus: Probable chorismate pyruvate-lyase (180 aa).

Substrate contacts are provided by arginine 82, leucine 120, and glutamate 165.

Belongs to the UbiC family.

It localises to the cytoplasm. The enzyme catalyses chorismate = 4-hydroxybenzoate + pyruvate. Its pathway is cofactor biosynthesis; ubiquinone biosynthesis. In terms of biological role, removes the pyruvyl group from chorismate, with concomitant aromatization of the ring, to provide 4-hydroxybenzoate (4HB) for the ubiquinone pathway. This Aliivibrio fischeri (strain ATCC 700601 / ES114) (Vibrio fischeri) protein is Probable chorismate pyruvate-lyase.